Consider the following 738-residue polypeptide: Polyribonucleotide nucleotidyltransferase (738 aa).

Positions 514 and 520 each coordinate Mg(2+). A KH domain is found at 580-639 (PRIITVKIPVDKIGEVIGPKGKMINQIQEDTGAEITIEDDGTIYIGAQVGSQAEAARATI). An S1 motif domain is found at 651 to 723 (GERYLGTVVK…SRGKLSLIPV (73 aa)).

It belongs to the polyribonucleotide nucleotidyltransferase family. It depends on Mg(2+) as a cofactor.

It localises to the cytoplasm. The enzyme catalyses RNA(n+1) + phosphate = RNA(n) + a ribonucleoside 5'-diphosphate. Its function is as follows. Involved in mRNA degradation. Catalyzes the phosphorolysis of single-stranded polyribonucleotides processively in the 3'- to 5'-direction. The protein is Polyribonucleotide nucleotidyltransferase of Streptomyces avermitilis (strain ATCC 31267 / DSM 46492 / JCM 5070 / NBRC 14893 / NCIMB 12804 / NRRL 8165 / MA-4680).